Reading from the N-terminus, the 469-residue chain is Glutamate--tRNA ligase 2 (469 aa).

Residues 10–20 (PSPTGYLHIGG) carry the 'HIGH' region motif. Positions 99, 101, 126, and 128 each coordinate Zn(2+). The 'KMSKS' region motif lies at 237–241 (RLSKR). K240 serves as a coordination point for ATP.

This sequence belongs to the class-I aminoacyl-tRNA synthetase family. Glutamate--tRNA ligase type 1 subfamily. As to quaternary structure, monomer. It depends on Zn(2+) as a cofactor.

It is found in the cytoplasm. It carries out the reaction tRNA(Glu) + L-glutamate + ATP = L-glutamyl-tRNA(Glu) + AMP + diphosphate. Functionally, catalyzes the attachment of glutamate to tRNA(Glu) in a two-step reaction: glutamate is first activated by ATP to form Glu-AMP and then transferred to the acceptor end of tRNA(Glu). In Coxiella burnetii (strain CbuG_Q212) (Coxiella burnetii (strain Q212)), this protein is Glutamate--tRNA ligase 2.